A 447-amino-acid polypeptide reads, in one-letter code: GTPase Der (447 aa).

EngA-type G domains are found at residues 4–165 (KIIT…SIKE) and 180–357 (LQIV…KIWN). GTP contacts are provided by residues 10 to 17 (GRPNVGKS), 57 to 61 (DTPGL), 119 to 122 (NKCE), 186 to 193 (GRPNAGKS), 233 to 237 (DTAGL), and 298 to 301 (NKWD). Positions 358 to 443 (KKITTGKLNE…PIRFTYVKNK (86 aa)) constitute a KH-like domain.

This sequence belongs to the TRAFAC class TrmE-Era-EngA-EngB-Septin-like GTPase superfamily. EngA (Der) GTPase family. Associates with the 50S ribosomal subunit.

Functionally, GTPase that plays an essential role in the late steps of ribosome biogenesis. This chain is GTPase Der, found in Rickettsia typhi (strain ATCC VR-144 / Wilmington).